We begin with the raw amino-acid sequence, 121 residues long: Small ribosomal subunit protein uS12c (121 aa).

The protein belongs to the universal ribosomal protein uS12 family. As to quaternary structure, part of the 30S ribosomal subunit.

It localises to the plastid. The protein resides in the chloroplast. In terms of biological role, with S4 and S5 plays an important role in translational accuracy. Located at the interface of the 30S and 50S subunits. The sequence is that of Small ribosomal subunit protein uS12c (rps12) from Bigelowiella natans (Pedinomonas minutissima).